Reading from the N-terminus, the 425-residue chain is L-cysteine:1D-myo-inositol 2-amino-2-deoxy-alpha-D-glucopyranoside ligase (425 aa).

C43 serves as a coordination point for Zn(2+). Residues 43–46 (CGIT), T58, and 81–83 (NVT) contribute to the L-cysteinyl-5'-AMP site. The short motif at 45–55 (ITPYDATHIGH) is the 'HIGH' region element. The 'ERGGDP' region signature appears at 195 to 200 (ERGGDP). Position 236 (W236) interacts with L-cysteinyl-5'-AMP. C240 provides a ligand contact to Zn(2+). 258–260 (GSD) serves as a coordination point for L-cysteinyl-5'-AMP. Position 265 (H265) interacts with Zn(2+). Position 295 (V295) interacts with L-cysteinyl-5'-AMP. Positions 301-305 (KMSKS) match the 'KMSKS' region motif.

This sequence belongs to the class-I aminoacyl-tRNA synthetase family. MshC subfamily. As to quaternary structure, monomer. The cofactor is Zn(2+).

The enzyme catalyses 1D-myo-inositol 2-amino-2-deoxy-alpha-D-glucopyranoside + L-cysteine + ATP = 1D-myo-inositol 2-(L-cysteinylamino)-2-deoxy-alpha-D-glucopyranoside + AMP + diphosphate + H(+). In terms of biological role, catalyzes the ATP-dependent condensation of GlcN-Ins and L-cysteine to form L-Cys-GlcN-Ins. This Sanguibacter keddieii (strain ATCC 51767 / DSM 10542 / NCFB 3025 / ST-74) protein is L-cysteine:1D-myo-inositol 2-amino-2-deoxy-alpha-D-glucopyranoside ligase.